Consider the following 268-residue polypeptide: 4-diphosphocytidyl-2-C-methyl-D-erythritol kinase (268 aa).

Lysine 10 is an active-site residue. 101 to 111 serves as a coordination point for ATP; it reads PTQAGLGGGST. Residue aspartate 143 is part of the active site.

It belongs to the GHMP kinase family. IspE subfamily.

It catalyses the reaction 4-CDP-2-C-methyl-D-erythritol + ATP = 4-CDP-2-C-methyl-D-erythritol 2-phosphate + ADP + H(+). Its pathway is isoprenoid biosynthesis; isopentenyl diphosphate biosynthesis via DXP pathway; isopentenyl diphosphate from 1-deoxy-D-xylulose 5-phosphate: step 3/6. In terms of biological role, catalyzes the phosphorylation of the position 2 hydroxy group of 4-diphosphocytidyl-2C-methyl-D-erythritol. The sequence is that of 4-diphosphocytidyl-2-C-methyl-D-erythritol kinase from Helicobacter pylori (strain ATCC 700392 / 26695) (Campylobacter pylori).